Consider the following 290-residue polypeptide: Glyceraldehyde-3-phosphate dehydrogenase (290 aa).

NAD(+) is bound by residues aspartate 13 and arginine 58. Residues serine 129–threonine 131, threonine 160, threonine 189–glycine 190, and arginine 212 contribute to the D-glyceraldehyde 3-phosphate site. Catalysis depends on cysteine 130, which acts as the Nucleophile.

The protein belongs to the glyceraldehyde-3-phosphate dehydrogenase family. As to quaternary structure, homotetramer.

It is found in the cytoplasm. It catalyses the reaction D-glyceraldehyde 3-phosphate + phosphate + NAD(+) = (2R)-3-phospho-glyceroyl phosphate + NADH + H(+). The protein operates within carbohydrate degradation; glycolysis; pyruvate from D-glyceraldehyde 3-phosphate: step 1/5. This is Glyceraldehyde-3-phosphate dehydrogenase (GPD) from Lactarius deterrimus (False saffron milkcap).